Reading from the N-terminus, the 305-residue chain is Tyrosine recombinase XerC (305 aa).

The Core-binding (CB) domain maps to T4–E95. Positions L116–V298 constitute a Tyr recombinase domain. Catalysis depends on residues R159, K182, H250, R253, and H276. The O-(3'-phospho-DNA)-tyrosine intermediate role is filled by Y285.

The protein belongs to the 'phage' integrase family. XerC subfamily. In terms of assembly, forms a cyclic heterotetrameric complex composed of two molecules of XerC and two molecules of XerD.

It is found in the cytoplasm. Its function is as follows. Site-specific tyrosine recombinase, which acts by catalyzing the cutting and rejoining of the recombining DNA molecules. The XerC-XerD complex is essential to convert dimers of the bacterial chromosome into monomers to permit their segregation at cell division. It also contributes to the segregational stability of plasmids. This is Tyrosine recombinase XerC from Rickettsia bellii (strain OSU 85-389).